We begin with the raw amino-acid sequence, 430 residues long: tRNA-2-methylthio-N(6)-dimethylallyladenosine synthase (430 aa).

The MTTase N-terminal domain maps to 1-110; the sequence is MKVHIFTYGC…VPDAVLNAKN (110 aa). Residues cysteine 10, cysteine 46, cysteine 75, cysteine 146, cysteine 150, and cysteine 153 each coordinate [4Fe-4S] cluster. Residues 132 to 363 form the Radical SAM core domain; it reads RSSNHHAWVT…LNLQKTINKE (232 aa). One can recognise a TRAM domain in the interval 366–427; the sequence is KSYLGKEVEV…AGPLYGEIKK (62 aa).

This sequence belongs to the methylthiotransferase family. MiaB subfamily. As to quaternary structure, monomer. The cofactor is [4Fe-4S] cluster.

The protein localises to the cytoplasm. The enzyme catalyses N(6)-dimethylallyladenosine(37) in tRNA + (sulfur carrier)-SH + AH2 + 2 S-adenosyl-L-methionine = 2-methylsulfanyl-N(6)-dimethylallyladenosine(37) in tRNA + (sulfur carrier)-H + 5'-deoxyadenosine + L-methionine + A + S-adenosyl-L-homocysteine + 2 H(+). Functionally, catalyzes the methylthiolation of N6-(dimethylallyl)adenosine (i(6)A), leading to the formation of 2-methylthio-N6-(dimethylallyl)adenosine (ms(2)i(6)A) at position 37 in tRNAs that read codons beginning with uridine. The polypeptide is tRNA-2-methylthio-N(6)-dimethylallyladenosine synthase (Fervidobacterium nodosum (strain ATCC 35602 / DSM 5306 / Rt17-B1)).